A 197-amino-acid polypeptide reads, in one-letter code: Protein GrpE (197 aa).

The interval 1-39 (MSSKEQKTPEGQAPEEIIMDQHEEIEAVEPEASAEQVDP) is disordered.

This sequence belongs to the GrpE family. In terms of assembly, homodimer.

Its subcellular location is the cytoplasm. In terms of biological role, participates actively in the response to hyperosmotic and heat shock by preventing the aggregation of stress-denatured proteins, in association with DnaK and GrpE. It is the nucleotide exchange factor for DnaK and may function as a thermosensor. Unfolded proteins bind initially to DnaJ; upon interaction with the DnaJ-bound protein, DnaK hydrolyzes its bound ATP, resulting in the formation of a stable complex. GrpE releases ADP from DnaK; ATP binding to DnaK triggers the release of the substrate protein, thus completing the reaction cycle. Several rounds of ATP-dependent interactions between DnaJ, DnaK and GrpE are required for fully efficient folding. This Escherichia coli O127:H6 (strain E2348/69 / EPEC) protein is Protein GrpE.